Here is a 192-residue protein sequence, read N- to C-terminus: Potassium channel HX13_20290 (192 aa).

The helical transmembrane segment at 1–24 (MTKGRLEAFSDGVLAIIITIMVLE) threads the bilayer. The RxxxFSD motif signature appears at 5-11 (RLEAFSD). Residue Leu-25 is a topological domain, cytoplasmic. Residues 26 to 29 (KVPE) form a short helix H1 region. At 26 to 39 (KVPEGSSWASLQPI) the chain is on the extracellular side. Residues 31-37 (SSWASLQ) are short helix H2. A helical membrane pass occupies residues 40–65 (LPRFLAYIFSFIYVGIYWNNHHHLFQ). The Cytoplasmic portion of the chain corresponds to 66–71 (TVKKVN). A helical transmembrane segment spans residues 72-93 (GSILWANLHLLFWLSLMPIATE). The Extracellular segment spans residues 94-101 (WIGTSHFA). A helical membrane pass occupies residues 102–126 (QNPVATYGIGLIMSAIAYTILENVI). Residues 127 to 133 (IRCEGEN) are Cytoplasmic-facing. Residues 134 to 162 (SKLKEAIHSKFKEYISIIFYVLGIATSFF) form a helical membrane-spanning segment. At 163–164 (YP) the chain is on the extracellular side. A helical transmembrane segment spans residues 165 to 180 (YIAIGFYYLVALIWLI). Residues 181–192 (PDKRIEKSLKEN) lie on the Cytoplasmic side of the membrane.

This sequence belongs to the TMEM175 family. Homotetramer.

The protein resides in the membrane. It carries out the reaction K(+)(in) = K(+)(out). Potassium channel. This chain is Potassium channel HX13_20290, found in Chryseobacterium sp. (strain P1-3).